A 118-amino-acid chain; its full sequence is Large ribosomal subunit protein bL19 (118 aa).

This sequence belongs to the bacterial ribosomal protein bL19 family.

In terms of biological role, this protein is located at the 30S-50S ribosomal subunit interface and may play a role in the structure and function of the aminoacyl-tRNA binding site. The chain is Large ribosomal subunit protein bL19 from Salinispora arenicola (strain CNS-205).